Reading from the N-terminus, the 194-residue chain is dTTP/UTP pyrophosphatase (194 aa).

Asp-69 serves as the catalytic Proton acceptor.

This sequence belongs to the Maf family. YhdE subfamily. The cofactor is a divalent metal cation.

The protein resides in the cytoplasm. The enzyme catalyses dTTP + H2O = dTMP + diphosphate + H(+). It catalyses the reaction UTP + H2O = UMP + diphosphate + H(+). Its function is as follows. Nucleoside triphosphate pyrophosphatase that hydrolyzes dTTP and UTP. May have a dual role in cell division arrest and in preventing the incorporation of modified nucleotides into cellular nucleic acids. In Moorella thermoacetica (strain ATCC 39073 / JCM 9320), this protein is dTTP/UTP pyrophosphatase.